We begin with the raw amino-acid sequence, 339 residues long: DNA-directed RNA polymerase subunit alpha (339 aa).

The segment at 1-233 (MVREEVAGST…DLFLPFLHAE (233 aa)) is alpha N-terminal domain (alpha-NTD). The alpha C-terminal domain (alpha-CTD) stretch occupies residues 266-339 (GIPLNCIFID…IDLLKNKLSF (74 aa)).

The protein belongs to the RNA polymerase alpha chain family. As to quaternary structure, in plastids the minimal PEP RNA polymerase catalytic core is composed of four subunits: alpha, beta, beta', and beta''. When a (nuclear-encoded) sigma factor is associated with the core the holoenzyme is formed, which can initiate transcription.

The protein resides in the plastid. It localises to the chloroplast. The enzyme catalyses RNA(n) + a ribonucleoside 5'-triphosphate = RNA(n+1) + diphosphate. Its function is as follows. DNA-dependent RNA polymerase catalyzes the transcription of DNA into RNA using the four ribonucleoside triphosphates as substrates. The sequence is that of DNA-directed RNA polymerase subunit alpha from Elymus canadensis (Canada wild rye).